A 244-amino-acid chain; its full sequence is DNA repair protein RecO (244 aa).

The protein belongs to the RecO family.

Involved in DNA repair and RecF pathway recombination. This Polynucleobacter necessarius subsp. necessarius (strain STIR1) protein is DNA repair protein RecO.